The primary structure comprises 206 residues: tRNA(Phe) 7-((3-amino-3-carboxypropyl)-4-demethylwyosine(37)-N(4))-methyltransferase 2 (206 aa).

It belongs to the TYW3 family.

The enzyme catalyses 4-demethyl-7-[(3S)-3-amino-3-carboxypropyl]wyosine(37) in tRNA(Phe) + S-adenosyl-L-methionine = 7-[(3S)-3-amino-3-carboxypropyl]wyosine(37) in tRNA(Phe) + S-adenosyl-L-homocysteine + H(+). Functionally, S-adenosyl-L-methionine-dependent methyltransferase that acts as a component of the wyosine derivatives biosynthesis pathway. Probably methylates N-4 position of wybutosine-86 to produce wybutosine-72. The protein is tRNA(Phe) 7-((3-amino-3-carboxypropyl)-4-demethylwyosine(37)-N(4))-methyltransferase 2 of Pyrococcus abyssi (strain GE5 / Orsay).